A 616-amino-acid polypeptide reads, in one-letter code: DNA-binding protein RFX5 (616 aa).

The tract at residues 1–29 (MAEDEPDAKSPKTGGRAPPGGAEAGEPTT) is disordered. Position 2 is an N-acetylalanine (A2). S10 carries the phosphoserine modification. Residues 13-29 (TGGRAPPGGAEAGEPTT) are compositionally biased toward low complexity. The N-terminal domain stretch occupies residues 25 to 90 (GEPTTLLQRL…PSTLSNEEYM (66 aa)). Residues 62–66 (LYLYL) are leucine-rich region; critical for dimer formation and for interaction with RFXAP. A DNA-binding region (RFX-type winged-helix) is located at residues 92-168 (AYRWIRNHLE…YCYSGIRRKT (77 aa)). A PxLPxI/L motif; mediates interaction with RFXANK motif is present at residues 173 to 178 (PPLPGL). S185 bears the Phosphoserine mark. 2 disordered regions span residues 252–314 (AEED…ESSA) and 391–616 (LPGP…ATPP). Positions 276–293 (GAHKKPERLAQPPKDLEA) are enriched in basic and acidic residues. Positions 391–401 (LPGPGPGPGRA) are enriched in pro residues. Over residues 424–434 (GPHDKGVKRTA) the composition is skewed to basic and acidic residues. Residues 463–473 (KRKRGRPRKKS) are compositionally biased toward basic residues. Over residues 534–546 (QGDGTVSKGGRGP) the composition is skewed to gly residues. The span at 606–616 (QEHKDPKATPP) shows a compositional bias: basic and acidic residues.

It belongs to the RFX family. In terms of assembly, homodimer. The RFX heterotetrameric complex consists of 2 molecules of RFX5 and one each of RFXAP and RFX-B/RFXANK; with each subunit representing a separate complementation group. Interacts (via PxLPxI/L motif) with RFXANK (via ankyrin repeats); the interaction is direct. RFX forms cooperative DNA binding complexes with X2BP and CBF/NF-Y. RFX associates with CIITA to form an active transcriptional complex. In terms of processing, phosphorylated. Ubiquitous.

The protein localises to the nucleus. In terms of biological role, activates transcription from class II MHC promoters. Recognizes X-boxes. Mediates cooperative binding between RFX and NF-Y. RFX binds the X1 box of MHC-II promoters. This is DNA-binding protein RFX5 (RFX5) from Homo sapiens (Human).